The sequence spans 395 residues: Nicotinamide/nicotinic acid mononucleotide adenylyltransferase 2 (395 aa).

Disordered stretches follow at residues 1–34 and 62–102; these read MDPTKAPDFKPPQPNEELQPPPDPTHTIPKSGPI and KKNA…NGID. Pro residues predominate over residues 9–24; the sequence is FKPPQPNEELQPPPDP. A phosphoserine mark is found at serine 85, serine 89, and serine 90. NAD(+) is bound by residues serine 167 and phenylalanine 168. Positions 175 and 209 each coordinate ATP. NAD(+) is bound by residues threonine 247, glycine 282, aspartate 284, tryptophan 295, arginine 314, and asparagine 345. 350–353 provides a ligand contact to ATP; the sequence is TKVR.

It belongs to the eukaryotic NMN adenylyltransferase family. The cofactor is Co(2+).

The protein resides in the nucleus. It catalyses the reaction beta-nicotinamide D-ribonucleotide + ATP + H(+) = diphosphate + NAD(+). The enzyme catalyses nicotinate beta-D-ribonucleotide + ATP + H(+) = deamido-NAD(+) + diphosphate. Its pathway is cofactor biosynthesis; NAD(+) biosynthesis; deamido-NAD(+) from nicotinate D-ribonucleotide: step 1/1. The protein operates within cofactor biosynthesis; NAD(+) biosynthesis; NAD(+) from nicotinamide D-ribonucleotide: step 1/1. Catalyzes the formation of NAD(+) from nicotinamide mononucleotide (NMN) and ATP. Can also use the deamidated form; nicotinic acid mononucleotide (NaMN) as substrate to form deamido-NAD(+) (NaAD). Key enzyme in both de novo and salvage pathways for NAD(+) biosynthesis. Predominantly acts in the salvage pathways via NMN. The polypeptide is Nicotinamide/nicotinic acid mononucleotide adenylyltransferase 2 (Saccharomyces cerevisiae (strain ATCC 204508 / S288c) (Baker's yeast)).